The primary structure comprises 306 residues: MFSDSDSSDEELSRIITDIDESPQDIQQSLHLRAGVSPEARVPPGGLTQEEWTIDYFSTYHTPLLNPGIPHELTQRCTDYTASILRRASAKMIQWDYVFYLLPRVWIMFPFIAREGLSHLTHLLTLTTSVLSATSLVFGWDLTVIELCNEMNIQGVYLPEVIEWLAQFSFLFTHVTLIVVSDGMMDLLLMFPMDIEEQPLAINIALHALQTSYTIMTPILFASPLLRIISCVLYACGHCPSARMLYAYTIMNRYTGESIAEMHTGFRCFRDQMIAYDMEFTNFLRDLTEEETPVLEITEPEPSPTE.

The next 3 helical transmembrane spans lie at 92–112 (MIQW…FPFI), 120–140 (LTHL…VFGW), and 161–181 (VIEW…IVVS).

In terms of assembly, interacts with host RACK1.

Its subcellular location is the host cytoplasm. The protein resides in the host cell membrane. The protein is ORF-B protein of Sander vitreus (Walleye).